A 68-amino-acid chain; its full sequence is Large ribosomal subunit protein bL32 (68 aa).

The protein belongs to the bacterial ribosomal protein bL32 family.

The polypeptide is Large ribosomal subunit protein bL32 (Cereibacter sphaeroides (strain ATCC 17025 / ATH 2.4.3) (Rhodobacter sphaeroides)).